The following is a 190-amino-acid chain: Elongation factor P 2 (190 aa).

This sequence belongs to the elongation factor P family.

It localises to the cytoplasm. It functions in the pathway protein biosynthesis; polypeptide chain elongation. Its function is as follows. Involved in peptide bond synthesis. Stimulates efficient translation and peptide-bond synthesis on native or reconstituted 70S ribosomes in vitro. Probably functions indirectly by altering the affinity of the ribosome for aminoacyl-tRNA, thus increasing their reactivity as acceptors for peptidyl transferase. The protein is Elongation factor P 2 (efp2) of Chlamydia muridarum (strain MoPn / Nigg).